A 265-amino-acid polypeptide reads, in one-letter code: Homeobox protein engrailed-2-A (265 aa).

Basic and acidic residues-rich tracts occupy residues methionine 1 to glutamate 12 and glycine 102 to lysine 115. Disordered regions lie at residues methionine 1 to histidine 38, leucine 75 to glutamine 140, and aspartate 156 to threonine 181. Positions aspartate 122–serine 136 are enriched in low complexity. Residues aspartate 176–threonine 235 constitute a DNA-binding region (homeobox).

The protein belongs to the engrailed homeobox family.

It localises to the nucleus. The protein is Homeobox protein engrailed-2-A (en2-a) of Xenopus laevis (African clawed frog).